The sequence spans 168 residues: Mesencephalic astrocyte-derived neurotrophic factor homolog (168 aa).

A signal peptide spans M1–A17. Cystine bridges form between C22-C109, C25-C97, C55-C66, and C143-C146.

The protein belongs to the ARMET family. In terms of tissue distribution, expressed in the intestine, spermatheca and nervous system. Expressed in the hypoderm. Expressed in structures of the excretory system. Not expressed in the male gonad.

It localises to the secreted. Its subcellular location is the endoplasmic reticulum lumen. Functionally, inhibits endoplasmic reticulum (ER) stress response. Retained in the ER under normal conditions and is up-regulated and secreted by the ER in response to ER stress and hypoxia. Following secretion by the ER, directly binds to 3-O-sulfogalactosylceramide, a lipid sulfatide in the outer cell membrane of target cells. Sulfatide binding promotes its cellular uptake by endocytosis, and is required for its role in alleviating ER stress under ER stress conditions. Has a neuroprotective role, ensuring survival of dopaminergic neurons during normal growth. The polypeptide is Mesencephalic astrocyte-derived neurotrophic factor homolog (Caenorhabditis elegans).